Here is a 294-residue protein sequence, read N- to C-terminus: MLDKLATERRNEQTMHLDEMSIEERLTIMNAEDHKVPQVIQEQLPVITQVVERVIASFRKGGRLIYIGAGTSGRLGILDAAECVPTFGVSPNQVIGLIAGGERALIQAVEGAEDSKELAVTDLKALHLTAEDTVVGIAASGRTPYVVGGLDYARELGATTASISCNRDAVISRHADYPIEVETGPEVLTGSTRLKAGTAQKLVLNMISTTSMIGVGKVYQNLMVDVQPTNEKLEVRAKRMIAEATGVDMEMAARYFASSKGHVKTAIVMILADVSYEEAVKRLERANGFVREAL.

The 164-residue stretch at 54–217 folds into the SIS domain; that stretch reads VIASFRKGGR…STTSMIGVGK (164 aa). Glu82 serves as the catalytic Proton donor. Glu113 is an active-site residue.

This sequence belongs to the GCKR-like family. MurNAc-6-P etherase subfamily. Homodimer.

It catalyses the reaction N-acetyl-D-muramate 6-phosphate + H2O = N-acetyl-D-glucosamine 6-phosphate + (R)-lactate. The protein operates within amino-sugar metabolism; N-acetylmuramate degradation. Functionally, specifically catalyzes the cleavage of the D-lactyl ether substituent of MurNAc 6-phosphate, producing GlcNAc 6-phosphate and D-lactate. This is N-acetylmuramic acid 6-phosphate etherase from Exiguobacterium sp. (strain ATCC BAA-1283 / AT1b).